We begin with the raw amino-acid sequence, 225 residues long: Protein-L-isoaspartate O-methyltransferase (225 aa).

S75 is an active-site residue.

The protein belongs to the methyltransferase superfamily. L-isoaspartyl/D-aspartyl protein methyltransferase family.

It is found in the cytoplasm. It carries out the reaction [protein]-L-isoaspartate + S-adenosyl-L-methionine = [protein]-L-isoaspartate alpha-methyl ester + S-adenosyl-L-homocysteine. Catalyzes the methyl esterification of L-isoaspartyl residues in peptides and proteins that result from spontaneous decomposition of normal L-aspartyl and L-asparaginyl residues. It plays a role in the repair and/or degradation of damaged proteins. The chain is Protein-L-isoaspartate O-methyltransferase from Xanthomonas axonopodis pv. citri (strain 306).